Reading from the N-terminus, the 290-residue chain is 4-diphosphocytidyl-2-C-methyl-D-erythritol kinase (290 aa).

Lys-13 is an active-site residue. 96–106 (PMGGGIGGGSS) is a binding site for ATP. Residue Asp-138 is part of the active site.

The protein belongs to the GHMP kinase family. IspE subfamily.

The enzyme catalyses 4-CDP-2-C-methyl-D-erythritol + ATP = 4-CDP-2-C-methyl-D-erythritol 2-phosphate + ADP + H(+). It participates in isoprenoid biosynthesis; isopentenyl diphosphate biosynthesis via DXP pathway; isopentenyl diphosphate from 1-deoxy-D-xylulose 5-phosphate: step 3/6. In terms of biological role, catalyzes the phosphorylation of the position 2 hydroxy group of 4-diphosphocytidyl-2C-methyl-D-erythritol. This chain is 4-diphosphocytidyl-2-C-methyl-D-erythritol kinase, found in Vibrio cholerae serotype O1 (strain ATCC 39541 / Classical Ogawa 395 / O395).